A 377-amino-acid chain; its full sequence is 3-(aryl)acrylate reductase (377 aa).

Residues 121 to 130 (FALTEPGAGS), 154 to 156 (FIT), Arg266, Gln277, and 334 to 338 (QIHGG) each bind FAD. The active-site Proton acceptor is the Glu361. 363–365 (TSE) serves as a coordination point for FAD.

Belongs to the acyl-CoA dehydrogenase family. FAD serves as cofactor.

It catalyses the reaction 3-phenylpropanoate + oxidized [electron-transfer flavoprotein] + H(+) = (E)-cinnamate + reduced [electron-transfer flavoprotein]. It carries out the reaction phloretate + oxidized [electron-transfer flavoprotein] + H(+) = (E)-4-coumarate + reduced [electron-transfer flavoprotein]. The enzyme catalyses indole-3-propanoate + oxidized [electron-transfer flavoprotein] + H(+) = (E)-3-(indol-3-yl)acrylate + reduced [electron-transfer flavoprotein]. Its pathway is amino-acid degradation. Functionally, essential for the reductive metabolism of L-phenylalanine, L-tyrosine and L-tryptophan. Catalyzes the reduction of phenylacrylic acid to phenylpropionic acid, 4-hydroxy-phenylacrylic acid to 4-hydroxy-phenylpropionic acid, and indoleacrylic acid to indolepropionic acid. In Clostridium sporogenes (strain ATCC 15579), this protein is 3-(aryl)acrylate reductase.